The primary structure comprises 452 residues: UPF0210 protein Csac_1314 (452 aa).

Belongs to the UPF0210 family. In terms of assembly, homodimer.

The protein is UPF0210 protein Csac_1314 of Caldicellulosiruptor saccharolyticus (strain ATCC 43494 / DSM 8903 / Tp8T 6331).